Reading from the N-terminus, the 464-residue chain is Glutamate--tRNA ligase (464 aa).

The 'HIGH' region signature appears at 9-19 (PSPTGYLHIGG). A 'KMSKS' region motif is present at residues 242–246 (KISKR). Residue Lys-245 participates in ATP binding.

Belongs to the class-I aminoacyl-tRNA synthetase family. Glutamate--tRNA ligase type 1 subfamily. As to quaternary structure, monomer.

It is found in the cytoplasm. It catalyses the reaction tRNA(Glu) + L-glutamate + ATP = L-glutamyl-tRNA(Glu) + AMP + diphosphate. Catalyzes the attachment of glutamate to tRNA(Glu) in a two-step reaction: glutamate is first activated by ATP to form Glu-AMP and then transferred to the acceptor end of tRNA(Glu). This Neisseria meningitidis serogroup A / serotype 4A (strain DSM 15465 / Z2491) protein is Glutamate--tRNA ligase.